Reading from the N-terminus, the 463-residue chain is Arginine biosynthesis bifunctional protein ArgJ, chloroplastic (463 aa).

Substrate contacts are provided by T207, K233, T244, E331, N458, and T463. The active-site Nucleophile is the T244.

The protein belongs to the ArgJ family. As to quaternary structure, heterodimer of an alpha and a beta chain.

It is found in the plastid. It localises to the chloroplast. The catalysed reaction is N(2)-acetyl-L-ornithine + L-glutamate = N-acetyl-L-glutamate + L-ornithine. The enzyme catalyses L-glutamate + acetyl-CoA = N-acetyl-L-glutamate + CoA + H(+). Its pathway is amino-acid biosynthesis; L-arginine biosynthesis; L-ornithine and N-acetyl-L-glutamate from L-glutamate and N(2)-acetyl-L-ornithine (cyclic): step 1/1. It participates in amino-acid biosynthesis; L-arginine biosynthesis; N(2)-acetyl-L-ornithine from L-glutamate: step 1/4. In terms of biological role, catalyzes two activities which are involved in the cyclic version of arginine biosynthesis: the synthesis of acetylglutamate from glutamate and acetyl-CoA, and of ornithine by transacetylation between acetylornithine and glutamate. This chain is Arginine biosynthesis bifunctional protein ArgJ, chloroplastic, found in Oryza sativa subsp. japonica (Rice).